The primary structure comprises 1008 residues: G protein-regulated inducer of neurite outgrowth 1 (1008 aa).

Residues 1–859 are disordered; that stretch reads MDTAEDPAWL…SPPSRRDAGL (859 aa). Residue Thr-60 is modified to Phosphothreonine. 2 positions are modified to phosphoserine: Ser-64 and Ser-75. Over residues 117-127 the composition is skewed to polar residues; that stretch reads ISGTPEATTSG. Composition is skewed to basic and acidic residues over residues 137–159, 167–178, 230–269, and 279–291; these read TEPK…KSSK, GKEDPGSSRKAD, PRKE…HPVS, and EKVD…KRDP. At Ser-237 the chain carries Phosphoserine. Composition is skewed to polar residues over residues 326–336 and 391–406; these read SGKNGPVSSGT and HTDT…TSLK. Phosphoserine is present on residues Ser-436 and Ser-452. Positions 454 to 466 are enriched in basic and acidic residues; that stretch reads GKEDPVSSRREDP. The span at 481-491 shows a compositional bias: polar residues; the sequence is PESSGKTNPVS. Positions 549–559 are enriched in basic and acidic residues; that stretch reads GKEDPVSKGKA. A Phosphoserine modification is found at Ser-615. The segment covering 643 to 656 has biased composition (low complexity); it reads PGQEGAAAPGEAGA. The segment covering 659–679 has biased composition (basic and acidic residues); that stretch reads LKKETPQASEKVDPGSCRKAE. Phosphoserine is present on Ser-737. A compositionally biased stretch (basic and acidic residues) spans 742–752; sequence RGSEGRVEPKA. Residues 755–764 show a composition bias toward polar residues; sequence VSSTEASSLG. Ser-799 carries the phosphoserine modification. Residues 838–847 show a composition bias toward low complexity; that stretch reads SAFSFQAAPR. At Thr-877 the chain carries Phosphothreonine. Phosphoserine is present on residues Ser-895 and Ser-914. An interaction with GNAO1 region spans residues 899–1008; it reads AAVAPPEPAE…CCSRAGPTAE (110 aa). The interval 943 to 986 is disordered; it reads ERQIEEHGRQGAPAPPPAARAGPGRSGSVRTAPPDGAAKRPPGL. Residue Ser-993 is modified to Phosphoserine. Residues Cys-999 and Cys-1000 are each lipidated (S-palmitoyl cysteine).

Interacts with activated forms of GNAI1, GNAO1 and GNAZ. In terms of processing, palmitoylation on Cys-999 and/or Cys-1000 is required for membrane targeting. In terms of tissue distribution, widely expressed in the central nervous system, with highest levels in spinal cord.

Its subcellular location is the cell membrane. The protein localises to the cell projection. It is found in the growth cone. Functionally, may be involved in neurite outgrowth. This chain is G protein-regulated inducer of neurite outgrowth 1 (GPRIN1), found in Homo sapiens (Human).